Consider the following 64-residue polypeptide: Disintegrin VB7A (64 aa).

Residues 1 to 64 (NSGNPCCDPV…SDCPRNPYKD (64 aa)) enclose the Disintegrin domain. Disulfide bonds link cysteine 6–cysteine 29, cysteine 20–cysteine 26, cysteine 25–cysteine 50, and cysteine 38–cysteine 57. A Cell attachment site motif is present at residues 42–44 (RGD).

The protein belongs to the disintegrin family. Dimeric disintegrin subfamily. As to quaternary structure, heterodimer with VB7B; disulfide-linked. In terms of tissue distribution, expressed by the venom gland.

The protein resides in the secreted. Its function is as follows. Poor inhibitor of platelet aggregation. The disintegrin inhibits the adhesion of cells expressing the RGD-dependent integrin alpha-5/beta-1 (ITGA5/ITGB1) to immobilized fibronectin. Inhibition on alpha-2b/beta-3 (ITGA2B/ITGB3) is low. The protein is Disintegrin VB7A of Vipera berus berus (Common viper).